A 381-amino-acid chain; its full sequence is UDP-4-amino-4-deoxy-L-arabinose--oxoglutarate aminotransferase (381 aa).

Residue lysine 182 is modified to N6-(pyridoxal phosphate)lysine.

The protein belongs to the DegT/DnrJ/EryC1 family. ArnB subfamily. As to quaternary structure, homodimer. Pyridoxal 5'-phosphate is required as a cofactor.

The catalysed reaction is UDP-4-amino-4-deoxy-beta-L-arabinose + 2-oxoglutarate = UDP-beta-L-threo-pentopyranos-4-ulose + L-glutamate. It participates in nucleotide-sugar biosynthesis; UDP-4-deoxy-4-formamido-beta-L-arabinose biosynthesis; UDP-4-deoxy-4-formamido-beta-L-arabinose from UDP-alpha-D-glucuronate: step 2/3. It functions in the pathway bacterial outer membrane biogenesis; lipopolysaccharide biosynthesis. In terms of biological role, catalyzes the conversion of UDP-4-keto-arabinose (UDP-Ara4O) to UDP-4-amino-4-deoxy-L-arabinose (UDP-L-Ara4N). The modified arabinose is attached to lipid A and is required for resistance to polymyxin and cationic antimicrobial peptides. The protein is UDP-4-amino-4-deoxy-L-arabinose--oxoglutarate aminotransferase of Photorhabdus laumondii subsp. laumondii (strain DSM 15139 / CIP 105565 / TT01) (Photorhabdus luminescens subsp. laumondii).